Here is a 102-residue protein sequence, read N- to C-terminus: NADH-quinone oxidoreductase subunit K 1 (102 aa).

A run of 3 helical transmembrane segments spans residues Leu5–Leu25, Ile31–Phe51, and Leu65–Phe85.

It belongs to the complex I subunit 4L family. In terms of assembly, NDH-1 is composed of 14 different subunits. Subunits NuoA, H, J, K, L, M, N constitute the membrane sector of the complex.

It is found in the cell inner membrane. The catalysed reaction is a quinone + NADH + 5 H(+)(in) = a quinol + NAD(+) + 4 H(+)(out). In terms of biological role, NDH-1 shuttles electrons from NADH, via FMN and iron-sulfur (Fe-S) centers, to quinones in the respiratory chain. The immediate electron acceptor for the enzyme in this species is believed to be ubiquinone. Couples the redox reaction to proton translocation (for every two electrons transferred, four hydrogen ions are translocated across the cytoplasmic membrane), and thus conserves the redox energy in a proton gradient. The polypeptide is NADH-quinone oxidoreductase subunit K 1 (Rhizobium etli (strain ATCC 51251 / DSM 11541 / JCM 21823 / NBRC 15573 / CFN 42)).